A 140-amino-acid polypeptide reads, in one-letter code: MAAVILERAAEFVAPGEARVGYPILAEVYRALTSDHEMRAFYETCAVSFFALFMLIIWVLHASRHPEGSTTRGTDAHTQTEGSTTRGTDAHTQTEGSRDQGSMTPEADDLTRPPLGHGRQIPVLRRRMVLDRDLRIDYSL.

A helical membrane pass occupies residues 44–60 (TCAVSFFALFMLIIWVL). Positions 66–118 (PEGSTTRGTDAHTQTEGSTTRGTDAHTQTEGSRDQGSMTPEADDLTRPPLGHG) are disordered. The segment covering 68-103 (GSTTRGTDAHTQTEGSTTRGTDAHTQTEGSRDQGSM) has biased composition (polar residues).

The protein resides in the membrane. The chain is Putative membrane protein ORF7 (ORF7) from Ictalurid herpesvirus 1 (strain Auburn) (IcHV-1).